The chain runs to 314 residues: Olfactory receptor 2Z1 (314 aa).

Residues Met-1–Gln-25 are Extracellular-facing. N-linked (GlcNAc...) asparagine glycosylation is present at Asn-5. Residues Leu-26–Ile-49 form a helical membrane-spanning segment. The Cytoplasmic segment spans residues Arg-50–Thr-57. Residues Pro-58 to Pro-79 traverse the membrane as a helical segment. Topologically, residues Lys-80–Gln-100 are extracellular. The chain crosses the membrane as a helical span at residues Ile-101–Tyr-120. The Cytoplasmic portion of the chain corresponds to Asp-121–Gln-139. Residues Val-140 to Ile-158 form a helical membrane-spanning segment. At Gln-159–Tyr-195 the chain is on the extracellular side. A helical transmembrane segment spans residues Glu-196 to Gly-219. Topologically, residues His-220–Lys-236 are cytoplasmic. A helical membrane pass occupies residues Ala-237–Tyr-259. Topologically, residues Met-260–Asn-272 are extracellular. The helical transmembrane segment at Val-273–Leu-292 threads the bilayer. Residues Arg-293 to Cys-314 are Cytoplasmic-facing.

Belongs to the G-protein coupled receptor 1 family.

The protein resides in the cell membrane. In terms of biological role, odorant receptor. This chain is Olfactory receptor 2Z1 (OR2Z1), found in Homo sapiens (Human).